The primary structure comprises 142 residues: Nucleoside diphosphate kinase (142 aa).

6 residues coordinate ATP: lysine 11, phenylalanine 59, arginine 87, threonine 93, arginine 104, and asparagine 114. The active-site Pros-phosphohistidine intermediate is histidine 117.

This sequence belongs to the NDK family. In terms of assembly, homotetramer. It depends on Mg(2+) as a cofactor.

Its subcellular location is the cytoplasm. It catalyses the reaction a 2'-deoxyribonucleoside 5'-diphosphate + ATP = a 2'-deoxyribonucleoside 5'-triphosphate + ADP. The enzyme catalyses a ribonucleoside 5'-diphosphate + ATP = a ribonucleoside 5'-triphosphate + ADP. Major role in the synthesis of nucleoside triphosphates other than ATP. The ATP gamma phosphate is transferred to the NDP beta phosphate via a ping-pong mechanism, using a phosphorylated active-site intermediate. In Aeromonas salmonicida (strain A449), this protein is Nucleoside diphosphate kinase.